The following is a 682-amino-acid chain: Nisin leader peptide-processing serine protease NisP (682 aa).

The signal sequence occupies residues Met1–Gly22. Positions Glu23–Arg195 are excised as a propeptide. Positions Gln231–Ala566 constitute a Peptidase S8 domain. Residues Asp259, His306, and Ser512 each act as charge relay system in the active site. The LPXTG sorting signal motif lies at Leu652 to Gly656. Pentaglycyl murein peptidoglycan amidated threonine is present on Thr655. Positions Gly656 to Asn682 are cleaved as a propeptide — removed by sortase.

It belongs to the peptidase S8 family.

It is found in the secreted. The protein localises to the cell wall. The protein operates within antibiotic biosynthesis; nisin biosynthesis. Cleaves the lantibiotic nisin precursor peptide. The sequence is that of Nisin leader peptide-processing serine protease NisP (nisP) from Lactococcus lactis subsp. lactis (Streptococcus lactis).